Here is a 1023-residue protein sequence, read N- to C-terminus: Exportin-T (1023 aa).

The protein belongs to the exportin family.

Its subcellular location is the nucleus. It is found in the cytoplasm. TRNA nucleus export receptor which facilitates tRNA translocation across the nuclear pore complex. Involved in pre-tRNA splicing, probably by affecting the interaction of pre-tRNA with splicing endonuclease. The polypeptide is Exportin-T (los1) (Sclerotinia sclerotiorum (strain ATCC 18683 / 1980 / Ss-1) (White mold)).